The following is a 118-amino-acid chain: Non-specific lipid-transfer protein (118 aa).

The first 25 residues, 1–25 (MDCIRILWSVAVGLLLVSWRPTMFA), serve as a signal peptide directing secretion. 4 disulfide bridges follow: cysteine 30-cysteine 76, cysteine 40-cysteine 53, cysteine 54-cysteine 98, and cysteine 74-cysteine 113.

Belongs to the plant LTP family.

In terms of biological role, plant non-specific lipid-transfer proteins transfer phospholipids as well as galactolipids across membranes. May play a role in wax or cutin deposition in the cell walls of expanding epidermal cells and certain secretory tissues. The chain is Non-specific lipid-transfer protein from Ambrosia artemisiifolia (Common ragweed).